The chain runs to 197 residues: Pyridoxal 5'-phosphate synthase subunit PdxT (197 aa).

53-55 serves as a coordination point for L-glutamine; it reads GES. Cys85 functions as the Nucleophile in the catalytic mechanism. Residues Arg114 and 142-143 each bind L-glutamine; that span reads IR. Active-site charge relay system residues include His179 and Glu181.

It belongs to the glutaminase PdxT/SNO family. As to quaternary structure, in the presence of PdxS, forms a dodecamer of heterodimers. Only shows activity in the heterodimer.

The catalysed reaction is aldehydo-D-ribose 5-phosphate + D-glyceraldehyde 3-phosphate + L-glutamine = pyridoxal 5'-phosphate + L-glutamate + phosphate + 3 H2O + H(+). It carries out the reaction L-glutamine + H2O = L-glutamate + NH4(+). It functions in the pathway cofactor biosynthesis; pyridoxal 5'-phosphate biosynthesis. Catalyzes the hydrolysis of glutamine to glutamate and ammonia as part of the biosynthesis of pyridoxal 5'-phosphate. The resulting ammonia molecule is channeled to the active site of PdxS. The sequence is that of Pyridoxal 5'-phosphate synthase subunit PdxT from Pyrococcus furiosus (strain ATCC 43587 / DSM 3638 / JCM 8422 / Vc1).